We begin with the raw amino-acid sequence, 419 residues long: Serine--tRNA ligase (419 aa).

Residue 226 to 228 (TSE) participates in L-serine binding. ATP is bound by residues 257–259 (RRE) and V273. E280 contacts L-serine. 344–347 (ELTS) serves as a coordination point for ATP. T379 lines the L-serine pocket.

It belongs to the class-II aminoacyl-tRNA synthetase family. Type-1 seryl-tRNA synthetase subfamily. As to quaternary structure, homodimer. The tRNA molecule binds across the dimer.

It localises to the cytoplasm. It carries out the reaction tRNA(Ser) + L-serine + ATP = L-seryl-tRNA(Ser) + AMP + diphosphate + H(+). The catalysed reaction is tRNA(Sec) + L-serine + ATP = L-seryl-tRNA(Sec) + AMP + diphosphate + H(+). The protein operates within aminoacyl-tRNA biosynthesis; selenocysteinyl-tRNA(Sec) biosynthesis; L-seryl-tRNA(Sec) from L-serine and tRNA(Sec): step 1/1. Functionally, catalyzes the attachment of serine to tRNA(Ser). Is also able to aminoacylate tRNA(Sec) with serine, to form the misacylated tRNA L-seryl-tRNA(Sec), which will be further converted into selenocysteinyl-tRNA(Sec). This chain is Serine--tRNA ligase, found in Mycobacterium tuberculosis (strain CDC 1551 / Oshkosh).